The primary structure comprises 338 residues: UDP-N-acetylglucosamine--N-acetylmuramyl-(pentapeptide) pyrophosphoryl-undecaprenol N-acetylglucosamine transferase (338 aa).

UDP-N-acetyl-alpha-D-glucosamine contacts are provided by residues 10–12 (TGG), N122, S177, and Q275.

This sequence belongs to the glycosyltransferase 28 family. MurG subfamily.

It is found in the cell inner membrane. The catalysed reaction is di-trans,octa-cis-undecaprenyl diphospho-N-acetyl-alpha-D-muramoyl-L-alanyl-D-glutamyl-meso-2,6-diaminopimeloyl-D-alanyl-D-alanine + UDP-N-acetyl-alpha-D-glucosamine = di-trans,octa-cis-undecaprenyl diphospho-[N-acetyl-alpha-D-glucosaminyl-(1-&gt;4)]-N-acetyl-alpha-D-muramoyl-L-alanyl-D-glutamyl-meso-2,6-diaminopimeloyl-D-alanyl-D-alanine + UDP + H(+). It functions in the pathway cell wall biogenesis; peptidoglycan biosynthesis. In terms of biological role, cell wall formation. Catalyzes the transfer of a GlcNAc subunit on undecaprenyl-pyrophosphoryl-MurNAc-pentapeptide (lipid intermediate I) to form undecaprenyl-pyrophosphoryl-MurNAc-(pentapeptide)GlcNAc (lipid intermediate II). The chain is UDP-N-acetylglucosamine--N-acetylmuramyl-(pentapeptide) pyrophosphoryl-undecaprenol N-acetylglucosamine transferase from Sulfurovum sp. (strain NBC37-1).